The chain runs to 551 residues: Adenine deaminase (551 aa).

Belongs to the metallo-dependent hydrolases superfamily. Adenine deaminase family. Requires Mn(2+) as cofactor.

It carries out the reaction adenine + H2O + H(+) = hypoxanthine + NH4(+). This chain is Adenine deaminase, found in Leuconostoc citreum (strain KM20).